Here is a 35-residue protein sequence, read N- to C-terminus: Cytochrome b6-f complex subunit 5 (35 aa).

Residues 5–25 (LLTGIVLGSIFITLLGLLAAA) traverse the membrane as a helical segment.

It belongs to the PetG family. As to quaternary structure, the 4 large subunits of the cytochrome b6-f complex are cytochrome b6, subunit IV (17 kDa polypeptide, PetD), cytochrome f and the Rieske protein, while the 4 small subunits are PetG, PetL, PetM and PetN. The complex functions as a dimer.

Its subcellular location is the plastid. It localises to the chloroplast thylakoid membrane. Component of the cytochrome b6-f complex, which mediates electron transfer between photosystem II (PSII) and photosystem I (PSI), cyclic electron flow around PSI, and state transitions. PetG is required for either the stability or assembly of the cytochrome b6-f complex. This Cyanidium caldarium (Red alga) protein is Cytochrome b6-f complex subunit 5.